A 108-amino-acid polypeptide reads, in one-letter code: Evasin P1156 (108 aa).

An N-terminal signal peptide occupies residues 1 to 28 (MEVKTYAFLQIAVFIFLGMQIFASLTDA). Cystine bridges form between cysteine 41–cysteine 63, cysteine 45–cysteine 65, and cysteine 56–cysteine 76. Asparagine 44 carries an N-linked (GlcNAc...) asparagine glycan. Residues 89 to 108 (NPSDSEIEAAKPKRSDTLSH) form a disordered region. The segment covering 96–108 (EAAKPKRSDTLSH) has biased composition (basic and acidic residues).

Its subcellular location is the secreted. Its function is as follows. Salivary chemokine-binding protein which has chemokine-neutralizing activity and binds to host chemokines CXCL1, CXCL2, CXCL3, CXCL5, CXCL6 and CXCL8. The chain is Evasin P1156 from Ixodes ricinus (Common tick).